A 110-amino-acid chain; its full sequence is Hydrogenase maturation factor HypA (110 aa).

H2 contacts Ni(2+). Zn(2+)-binding residues include C70, C73, C86, and C89.

This sequence belongs to the HypA/HybF family.

Its function is as follows. Involved in the maturation of [NiFe] hydrogenases. Required for nickel insertion into the metal center of the hydrogenase. In Geobacter metallireducens (strain ATCC 53774 / DSM 7210 / GS-15), this protein is Hydrogenase maturation factor HypA.